The chain runs to 270 residues: Sec-independent protein translocase protein TatC (270 aa).

6 helical membrane-spanning segments follow: residues 25-45 (FIAV…LFDI), 75-95 (VSLL…FWMF), 111-131 (VVIL…FIVF), 156-176 (LGFA…PLVL), 195-211 (KYAI…ITPP), and 213-233 (VVTQ…SIIG). A disordered region spans residues 243–270 (SDEEEAAENSDVQTDKSTDDTTPGEDQN).

It belongs to the TatC family. As to quaternary structure, the Tat system comprises two distinct complexes: a TatABC complex, containing multiple copies of TatA, TatB and TatC subunits, and a separate TatA complex, containing only TatA subunits. Substrates initially bind to the TatABC complex, which probably triggers association of the separate TatA complex to form the active translocon.

The protein localises to the cell inner membrane. Its function is as follows. Part of the twin-arginine translocation (Tat) system that transports large folded proteins containing a characteristic twin-arginine motif in their signal peptide across membranes. Together with TatB, TatC is part of a receptor directly interacting with Tat signal peptides. This chain is Sec-independent protein translocase protein TatC, found in Desulforapulum autotrophicum (strain ATCC 43914 / DSM 3382 / VKM B-1955 / HRM2) (Desulfobacterium autotrophicum).